The following is a 103-amino-acid chain: UPF0132 membrane protein AF_0105 (103 aa).

The next 3 membrane-spanning stretches (helical) occupy residues 5–25 (VAGALSYLLGPITGILFLLME), 35–55 (AMQSTITFAGFWVLDIALSFI), and 58–78 (IGVLLIPIVGLVAFITWLVCI).

The protein belongs to the UPF0132 family.

The protein localises to the cell membrane. In Archaeoglobus fulgidus (strain ATCC 49558 / DSM 4304 / JCM 9628 / NBRC 100126 / VC-16), this protein is UPF0132 membrane protein AF_0105.